A 189-amino-acid polypeptide reads, in one-letter code: Putative transcription factor ovo-like protein 3 (189 aa).

Residues 1–20 are disordered; that stretch reads MPRVFLVRSRRPQPPNWSHL. C2H2-type zinc fingers lie at residues 69 to 91, 97 to 119, 125 to 148, and 164 to 186; these read LGCP…LKCH, HVCH…MRTH, FRCG…AKVH, and HVCE…RTLH.

It belongs to the krueppel C2H2-type zinc-finger protein family.

It localises to the nucleus. Its function is as follows. May act as a transcription regulator. This Mus musculus (Mouse) protein is Putative transcription factor ovo-like protein 3 (Ovol3).